Consider the following 35-residue polypeptide: Alpha-amanitin proprotein (35 aa).

Positions 1–10 are excised as a propeptide; the sequence is MSDINATRLP. I11 bears the (3R,4R)-4,5-dihydroxyisoleucine; in form alpha-amanitin mark. At I11 the chain carries (3R,4S)-4-hydroxyisoleucine; in form gamma-amanitin. The segment at residues 11–18 is a cross-link (cyclopeptide (Ile-Pro)); the sequence is IWGIGCNP. The segment at residues 12 to 16 is a cross-link (2'-cysteinyl-6'-hydroxytryptophan sulfoxide (Trp-Cys)); it reads WGIGC. P18 is modified (4-hydroxyproline). The propeptide occupies 19–35; the sequence is CVGDDVTTLLTRGEALC.

It belongs to the MSDIN fungal toxin family. Processed by the macrocyclase-peptidase enzyme POPB to yield a toxic cyclic decapeptide. POPB first removes 10 residues from the N-terminus. Conformational trapping of the remaining peptide forces the enzyme to release this intermediate rather than proceed to macrocyclization. The enzyme rebinds the remaining peptide in a different conformation and catalyzes macrocyclization of the N-terminal 8 residues.

Functionally, major toxin belonging to the bicyclic octapeptides amatoxins that acts by binding non-competitively to RNA polymerase II and greatly slowing the elongation of transcripts from target promoters. The protein is Alpha-amanitin proprotein of Amanita bisporigera (Destroying angel).